The chain runs to 263 residues: Copper homeostasis protein cutC homolog (263 aa).

Belongs to the CutC family.

Its function is as follows. Involved in copper homeostasis. This chain is Copper homeostasis protein cutC homolog, found in Drosophila melanogaster (Fruit fly).